Consider the following 602-residue polypeptide: MLHFTAATSRFRLGRERANSVRSDGGWGVLQPVSATFNPPLRGWQRRALVQYLGTQPRDFLAVATPGSGKTSFALRIAAELLRYHTVEQVTVVVPTEHLKVQWAHAAAAHGLSLDPKFANSNPQTSPEYHGVMVTYAQVASHPTLHRVRTEARKTLVVFDEIHHGGDAKTWGDAIREAFGDATRRLALTGTPFRSDDSPIPFVSYQPDADGVLRSQADHTYGYAEALADGVVRPVVFLAYSGQARWRDSAGEEYEARLGEPLSAEQTARAWRTALDPEGEWMPAVITAADRRLRQLRAHVPDAGGMIIASDRTTARAYARLLTTMTAEEPTVVLSDDPGSSARITEFAQGTGRWLVAVRMVSEGVDVPRLSVGVYATNASTPLFFAQAIGRFVRSRRPGETASIFVPSVPNLLQLASALEVQRNHVLGRPHRESAHDPLDGDPATRTQTERGGAERGFTALGADAELDQVIFDGSSFGTATPTGSDEEADYLGIPGLLDAEQMRALLHRRQDEQLRKRAQLQKGATQPATSGASASVHGQLRDLRRELHTLVSIAHHRTGKPHGWIHDELRRRCGGPPIAAATRAQIKARIDALRQLNSERS.

The Helicase ATP-binding domain occupies 51-210; the sequence is QYLGTQPRDF…PFVSYQPDAD (160 aa). The segment covering 430–439 has biased composition (basic and acidic residues); it reads PHRESAHDPL. Disordered regions lie at residues 430–452 and 518–538; these read PHRESAHDPLDGDPATRTQTERG and RAQLQKGATQPATSGASASVH. A compositionally biased stretch (polar residues) spans 523 to 534; that stretch reads KGATQPATSGAS.

To M.leprae ML1624.

This is an uncharacterized protein from Mycobacterium tuberculosis (strain CDC 1551 / Oshkosh).